Consider the following 251-residue polypeptide: Triosephosphate isomerase (251 aa).

Substrate is bound at residue 9 to 11 (NWK). Catalysis depends on His95, which acts as the Electrophile. Residue Glu167 is the Proton acceptor of the active site. Residues Gly173, Ser213, and 234–235 (GG) contribute to the substrate site.

It belongs to the triosephosphate isomerase family. Homodimer.

The protein resides in the cytoplasm. The enzyme catalyses D-glyceraldehyde 3-phosphate = dihydroxyacetone phosphate. It participates in carbohydrate biosynthesis; gluconeogenesis. It functions in the pathway carbohydrate degradation; glycolysis; D-glyceraldehyde 3-phosphate from glycerone phosphate: step 1/1. Involved in the gluconeogenesis. Catalyzes stereospecifically the conversion of dihydroxyacetone phosphate (DHAP) to D-glyceraldehyde-3-phosphate (G3P). The chain is Triosephosphate isomerase from Fusobacterium nucleatum subsp. nucleatum (strain ATCC 25586 / DSM 15643 / BCRC 10681 / CIP 101130 / JCM 8532 / KCTC 2640 / LMG 13131 / VPI 4355).